Reading from the N-terminus, the 94-residue chain is Integration host factor subunit beta (94 aa).

It belongs to the bacterial histone-like protein family. As to quaternary structure, heterodimer of an alpha and a beta chain.

This protein is one of the two subunits of integration host factor, a specific DNA-binding protein that functions in genetic recombination as well as in transcriptional and translational control. The chain is Integration host factor subunit beta from Roseobacter denitrificans (strain ATCC 33942 / OCh 114) (Erythrobacter sp. (strain OCh 114)).